A 430-amino-acid chain; its full sequence is Glycine reductase complex component B subunits alpha and beta (430 aa).

The active-site Schiff-base intermediate with substrate; via pyruvic acid is the cysteine 242. Cysteine 242 carries the pyruvic acid (Cys) modification.

Heterohexamer of two alpha, two beta and two gamma subunits. Component of the glycine reductase complex, together with components A and C. PB is substrate specific. The peptide chain is cleaved into beta and alpha chains, and the alpha chain N-terminal cysteine is deaminated and oxidized to form a reactive pyruvoyl group.

It catalyses the reaction acetyl phosphate + [thioredoxin]-disulfide + NH4(+) + H2O = [thioredoxin]-dithiol + glycine + phosphate + H(+). In terms of biological role, in the first step of glycine reductase, the substrate is bound to component PB via a Schiff base intermediate. Then the PB-activated substrate is nucleophilically attacked by the selenol anion of component PA to transform it to a carboxymethylated selenoether and the respective amine. By action of component PC, acetyl phosphate is formed, leaving component PA in its oxidized state. Finally component PA becomes reduced by the thioredoxin system to start a new catalytic cycle of reductive deamination. This is Glycine reductase complex component B subunits alpha and beta (grdE) from Acetoanaerobium sticklandii (strain ATCC 12662 / DSM 519 / JCM 1433 / CCUG 9281 / NCIMB 10654 / HF) (Clostridium sticklandii).